The primary structure comprises 553 residues: Dihydroxy-acid dehydratase (553 aa).

D78 is a binding site for Mg(2+). C119 provides a ligand contact to [2Fe-2S] cluster. The Mg(2+) site is built by D120 and K121. Residue K121 is modified to N6-carboxylysine. C191 lines the [2Fe-2S] cluster pocket. E442 serves as a coordination point for Mg(2+). The Proton acceptor role is filled by S468.

This sequence belongs to the IlvD/Edd family. As to quaternary structure, homodimer. Requires [2Fe-2S] cluster as cofactor. Mg(2+) is required as a cofactor.

The catalysed reaction is (2R)-2,3-dihydroxy-3-methylbutanoate = 3-methyl-2-oxobutanoate + H2O. It catalyses the reaction (2R,3R)-2,3-dihydroxy-3-methylpentanoate = (S)-3-methyl-2-oxopentanoate + H2O. It participates in amino-acid biosynthesis; L-isoleucine biosynthesis; L-isoleucine from 2-oxobutanoate: step 3/4. It functions in the pathway amino-acid biosynthesis; L-valine biosynthesis; L-valine from pyruvate: step 3/4. Its function is as follows. Functions in the biosynthesis of branched-chain amino acids. Catalyzes the dehydration of (2R,3R)-2,3-dihydroxy-3-methylpentanoate (2,3-dihydroxy-3-methylvalerate) into 2-oxo-3-methylpentanoate (2-oxo-3-methylvalerate) and of (2R)-2,3-dihydroxy-3-methylbutanoate (2,3-dihydroxyisovalerate) into 2-oxo-3-methylbutanoate (2-oxoisovalerate), the penultimate precursor to L-isoleucine and L-valine, respectively. This chain is Dihydroxy-acid dehydratase, found in Carboxydothermus hydrogenoformans (strain ATCC BAA-161 / DSM 6008 / Z-2901).